A 325-amino-acid polypeptide reads, in one-letter code: MSGPLVLAVPSKGRLQENAEAFFGRAGLNLSKPGGARDYRGTISGLDNVEIAYLSASDIASQLARGTVHLGVTGEDLVREEITDADKRVLLIDTLGFGGANVVVAVPQAWIDVRTMADLDDVASGFRAQHNRRMRVATKYINLTRGFFASHGIVDYRIVESAGATEGAPAVGTAELIVDITSTGSTLVANGLKVLDDGVILRSQANLVASRDADWSEGPRESARIILDHIHARARASKYREVRTRFKGCDAAMLTEAHNRFGVVAPFGGPTSSGMLTLHCPPAQIYSLGSFLRAHGAETVSVASLDYVLDRENPLFARLEAFLRS.

The protein belongs to the ATP phosphoribosyltransferase family. Long subfamily. Mg(2+) serves as cofactor.

It localises to the cytoplasm. The enzyme catalyses 1-(5-phospho-beta-D-ribosyl)-ATP + diphosphate = 5-phospho-alpha-D-ribose 1-diphosphate + ATP. Its pathway is amino-acid biosynthesis; L-histidine biosynthesis; L-histidine from 5-phospho-alpha-D-ribose 1-diphosphate: step 1/9. Its activity is regulated as follows. Feedback inhibited by histidine. In terms of biological role, catalyzes the condensation of ATP and 5-phosphoribose 1-diphosphate to form N'-(5'-phosphoribosyl)-ATP (PR-ATP). Has a crucial role in the pathway because the rate of histidine biosynthesis seems to be controlled primarily by regulation of HisG enzymatic activity. The sequence is that of ATP phosphoribosyltransferase from Bradyrhizobium sp. (strain ORS 278).